Consider the following 200-residue polypeptide: Glycerol-3-phosphate acyltransferase (200 aa).

A run of 5 helical transmembrane segments spans residues 2–22 (FNIPAVAVSYLIGSLSFAVIV), 51–71 (KAAALTLLGDAAKGLVAVLLA), 84–104 (AIAAVALAALVGHMWPVFFGF), 114–134 (LGVLLALSPATALVCALIWLV), and 158–178 (LFFMPHTSWIFATLAIAILVL).

This sequence belongs to the PlsY family. In terms of assembly, probably interacts with PlsX.

Its subcellular location is the cell inner membrane. It catalyses the reaction an acyl phosphate + sn-glycerol 3-phosphate = a 1-acyl-sn-glycero-3-phosphate + phosphate. Its pathway is lipid metabolism; phospholipid metabolism. Catalyzes the transfer of an acyl group from acyl-phosphate (acyl-PO(4)) to glycerol-3-phosphate (G3P) to form lysophosphatidic acid (LPA). This enzyme utilizes acyl-phosphate as fatty acyl donor, but not acyl-CoA or acyl-ACP. This Neisseria gonorrhoeae (strain ATCC 700825 / FA 1090) protein is Glycerol-3-phosphate acyltransferase.